Reading from the N-terminus, the 344-residue chain is MSNAITMGIFWHLIGAASAACFYAPFKKVKKWSWETMWSVGGIVSWIILPWAISALLLPDFWAYYSSFSLSTLLPVFLFGAMWGIGNINYGLTMRYLGMSMGIGIAIGITLIVGTLMTPIINGNFDVLINTEGGRMTLLGVLVALIGVGIVTRAGQLKERKMGIKAEEFNLKKGLVLAVMCGIFSAGMSFAMNAAKPMHEAAAALGVDPLYVALPSYVVIMGGGAIINLGFCFIRLAKVKDLSLKADFSLAKPLIIHNVLLSALGGLMWYLQFFFYAWGHARIPAQYDYISWMLHMSFYVLCGGIVGLVLKEWNNTGRRPVTVLSLGCVVIIVAANIVGIGMAN.

Transmembrane regions (helical) follow at residues 4-24 (AITMGIFWHLIGAASAACFYA), 38-58 (WSVGGIVSWIILPWAISALLL), 68-88 (FSLSTLLPVFLFGAMWGIGNI), 101-121 (MGIGIAIGITLIVGTLMTPII), 137-157 (TLLGVLVALIGVGIVTRAGQL), 175-195 (LVLAVMCGIFSAGMSFAMNAA), 214-234 (LPSYVVIMGGGAIINLGFCFI), 259-279 (VLLSALGGLMWYLQFFFYAWG), 290-310 (ISWMLHMSFYVLCGGIVGLVL), and 323-343 (VLSLGCVVIIVAANIVGIGMA).

The protein belongs to the L-rhamnose transporter (TC 2.A.7.6) family.

It is found in the cell inner membrane. The enzyme catalyses L-rhamnopyranose(in) + H(+)(in) = L-rhamnopyranose(out) + H(+)(out). Its function is as follows. Uptake of L-rhamnose across the cytoplasmic membrane with the concomitant transport of protons into the cell (symport system). This is L-rhamnose-proton symporter from Shigella flexneri.